Consider the following 467-residue polypeptide: Chromosomal replication initiator protein DnaA (467 aa).

Residues 1-80 (MTSELWHQCL…APRISLKIGS (80 aa)) form a domain I, interacts with DnaA modulators region. The domain II stretch occupies residues 80-130 (SITGNSKGQQASKDSAVGATRTTAPSRPVIADVAPSGERNVTVEGAIKHES). A domain III, AAA+ region region spans residues 131–347 (YLNPTFTFET…GALKLVIANA (217 aa)). ATP contacts are provided by G175, G177, K178, and T179. The tract at residues 348 to 467 (HFTGQEITPA…YQNFMRMLTS (120 aa)) is domain IV, binds dsDNA.

This sequence belongs to the DnaA family. In terms of assembly, oligomerizes as a right-handed, spiral filament on DNA at oriC.

The protein resides in the cytoplasm. Functionally, plays an essential role in the initiation and regulation of chromosomal replication. ATP-DnaA binds to the origin of replication (oriC) to initiate formation of the DNA replication initiation complex once per cell cycle. Binds the DnaA box (a 9 base pair repeat at the origin) and separates the double-stranded (ds)DNA. Forms a right-handed helical filament on oriC DNA; dsDNA binds to the exterior of the filament while single-stranded (ss)DNA is stabiized in the filament's interior. The ATP-DnaA-oriC complex binds and stabilizes one strand of the AT-rich DNA unwinding element (DUE), permitting loading of DNA polymerase. After initiation quickly degrades to an ADP-DnaA complex that is not apt for DNA replication. Binds acidic phospholipids. In Hahella chejuensis (strain KCTC 2396), this protein is Chromosomal replication initiator protein DnaA.